The sequence spans 1213 residues: Chitin synthase 3 (1213 aa).

The segment at 1-97 (MSNFRDSSSP…TPPHQEEEED (97 aa)) is disordered. Residues 1-168 (MSNFRDSSSP…KPKHDIYFWK (168 aa)) are Cytoplasmic-facing. A compositionally biased stretch (basic and acidic residues) spans 32–44 (IRPERSRMDESHP). Over residues 75 to 87 (ELSTSRSHLSNYA) the composition is skewed to polar residues. The chain crosses the membrane as a helical span at residues 169–189 (VYCYAITFWAPAPLLKLFGLP). Residues 190-200 (TKDRQFAWREK) lie on the Extracellular side of the membrane. The chain crosses the membrane as a helical span at residues 201-221 (IGLISCILYVGAFVAYLTFGF). Over 222–450 (TKTVCSSQVV…TDTIGCIASK (229 aa)) the chain is Cytoplasmic. A helical membrane pass occupies residues 451-471 (VVLYMSLVFILSVVVVKFIMA). Residues 472-1016 (CWFKWVTSRK…INSTVHNLFE (545 aa)) lie on the Extracellular side of the membrane. 2 N-linked (GlcNAc...) asparagine glycosylation sites follow: asparagine 588 and asparagine 1008. Residues 1017 to 1037 (LVLVKDLCGTFCFSMQFVIFI) form a helical membrane-spanning segment. Residues 1038-1039 (EL) lie on the Cytoplasmic side of the membrane. A helical transmembrane segment spans residues 1040-1060 (IGTLVLPAAITFTIYVIIVAI). Over 1061–1065 (VSKPT) the chain is Extracellular. A helical membrane pass occupies residues 1066–1086 (PVMSLVLLAVIFGLPGCLIVI). The Cytoplasmic portion of the chain corresponds to 1087 to 1213 (TVSSLSYLVY…LSQGSSSGSS (127 aa)). The interval 1161–1213 (ERRSTENRKQQQQQQLTNNSSNNLAVPGAAWDPSNTGGNLIDDLSQGSSSGSS) is disordered.

The protein belongs to the chitin synthase family. Class IV subfamily.

It is found in the cell membrane. The catalysed reaction is [(1-&gt;4)-N-acetyl-beta-D-glucosaminyl](n) + UDP-N-acetyl-alpha-D-glucosamine = [(1-&gt;4)-N-acetyl-beta-D-glucosaminyl](n+1) + UDP + H(+). In terms of biological role, polymerizes chitin, a structural polymer of the cell wall and septum, by transferring the sugar moiety of UDP-GlcNAc to the non-reducing end of the growing chitin polymer. This Candida albicans (Yeast) protein is Chitin synthase 3 (CHS3).